The chain runs to 428 residues: Probable methanogen homoaconitase large subunit (428 aa).

[4Fe-4S] cluster is bound by residues Cys304, Cys364, and Cys367.

It belongs to the aconitase/IPM isomerase family. LeuC type 2 subfamily. Heterotetramer of 2 HacA and 2 HacB proteins.

The enzyme catalyses (2R)-homocitrate = (2R,3S)-homoisocitrate. The catalysed reaction is (2R)-homocitrate = cis-homoaconitate + H2O. It carries out the reaction (2R,3S)-homoisocitrate = cis-homoaconitate + H2O. It catalyses the reaction cis-(homo)2aconitate + H2O = (2R,3S)-iso(homo)2citrate. The enzyme catalyses cis-(homo)3aconitate + H2O = (2R,3S)-iso(homo)3citrate. It functions in the pathway organic acid metabolism; 2-oxosuberate biosynthesis. Component of a hydro-lyase with broad substrate specificity for cis-unsaturated tricarboxylic acids. Catalyzes both the reversible dehydration of (R)-homocitrate ((R)-2-hydroxybutane-1,2,4-tricarboxylate) to produce cis-homoaconitate ((Z)-but-1-ene-1,2,4-tricarboxylate), and its hydration to homoisocitrate ((1R,2S)-1-hydroxybutane-1,2,4-tricarboxylate). Is also able to hydrate the analogous longer chain substrates cis-homo(2)-aconitate, cis-homo(3)-aconitate. These reactions are part of the biosynthesis pathway of coenzyme B. This is Probable methanogen homoaconitase large subunit (hacA) from Methanothermobacter thermautotrophicus (strain ATCC 29096 / DSM 1053 / JCM 10044 / NBRC 100330 / Delta H) (Methanobacterium thermoautotrophicum).